The sequence spans 805 residues: Leucine--tRNA ligase (805 aa).

The short motif at Pro40 to His51 is the 'HIGH' region element. The short motif at Lys576–Ser580 is the 'KMSKS' region element. An ATP-binding site is contributed by Lys579.

It belongs to the class-I aminoacyl-tRNA synthetase family.

The protein resides in the cytoplasm. The catalysed reaction is tRNA(Leu) + L-leucine + ATP = L-leucyl-tRNA(Leu) + AMP + diphosphate. The sequence is that of Leucine--tRNA ligase from Chlorobium chlorochromatii (strain CaD3).